The following is a 384-amino-acid chain: Chorismate synthase (384 aa).

NADP(+) is bound by residues Arg39 and Arg45. FMN contacts are provided by residues 130-132 (RSS), 248-249 (NA), Gly292, 307-311 (KPIPT), and Arg333.

It belongs to the chorismate synthase family. In terms of assembly, homotetramer. It depends on FMNH2 as a cofactor.

The catalysed reaction is 5-O-(1-carboxyvinyl)-3-phosphoshikimate = chorismate + phosphate. It participates in metabolic intermediate biosynthesis; chorismate biosynthesis; chorismate from D-erythrose 4-phosphate and phosphoenolpyruvate: step 7/7. Functionally, catalyzes the anti-1,4-elimination of the C-3 phosphate and the C-6 proR hydrogen from 5-enolpyruvylshikimate-3-phosphate (EPSP) to yield chorismate, which is the branch point compound that serves as the starting substrate for the three terminal pathways of aromatic amino acid biosynthesis. This reaction introduces a second double bond into the aromatic ring system. The sequence is that of Chorismate synthase from Exiguobacterium sibiricum (strain DSM 17290 / CCUG 55495 / CIP 109462 / JCM 13490 / 255-15).